Here is a 128-residue protein sequence, read N- to C-terminus: Large ribosomal subunit protein bL20c (128 aa).

This sequence belongs to the bacterial ribosomal protein bL20 family.

The protein localises to the plastid. It localises to the chloroplast. In terms of biological role, binds directly to 23S ribosomal RNA and is necessary for the in vitro assembly process of the 50S ribosomal subunit. It is not involved in the protein synthesizing functions of that subunit. This is Large ribosomal subunit protein bL20c from Trachelium caeruleum (Blue throatwort).